A 201-amino-acid chain; its full sequence is Peptidyl-tRNA hydrolase (201 aa).

Residue Tyr-14 coordinates tRNA. His-19 acts as the Proton acceptor in catalysis. The tRNA site is built by Tyr-64, Asn-66, and Asn-112.

Belongs to the PTH family. In terms of assembly, monomer.

The protein resides in the cytoplasm. It carries out the reaction an N-acyl-L-alpha-aminoacyl-tRNA + H2O = an N-acyl-L-amino acid + a tRNA + H(+). Its function is as follows. Hydrolyzes ribosome-free peptidyl-tRNAs (with 1 or more amino acids incorporated), which drop off the ribosome during protein synthesis, or as a result of ribosome stalling. Catalyzes the release of premature peptidyl moieties from peptidyl-tRNA molecules trapped in stalled 50S ribosomal subunits, and thus maintains levels of free tRNAs and 50S ribosomes. The protein is Peptidyl-tRNA hydrolase of Bradyrhizobium sp. (strain ORS 278).